Here is a 316-residue protein sequence, read N- to C-terminus: MST50-interacting protein 11 (316 aa).

7 WD repeats span residues 13 to 53 (GHNG…TSYG), 61 to 100 (GHSH…TTRR), 103 to 142 (GHTN…KYTI), 146 to 187 (GHSE…LQTD), 190 to 229 (GHTG…HLYS), 231 to 269 (NAND…KVDE), and 281 to 316 (SREP…MSRA).

This sequence belongs to the WD repeat G protein beta family. Ribosomal protein RACK1 subfamily. In terms of assembly, interacts with MST50 and MCK1.

Functionally, involved in regulating the cell wall integrity and MPS1 activation via its interaction with the MAPKKK MCK1. In Pyricularia oryzae (strain 70-15 / ATCC MYA-4617 / FGSC 8958) (Rice blast fungus), this protein is MST50-interacting protein 11.